The chain runs to 85 residues: Large ribosomal subunit protein bL27 (85 aa).

The protein belongs to the bacterial ribosomal protein bL27 family.

The sequence is that of Large ribosomal subunit protein bL27 from Pseudomonas fluorescens (strain SBW25).